Consider the following 191-residue polypeptide: MSLISRLKAVVAGDEYLDDDFDELDYATEDELNDINDFKQTQRNSNALANSNPFDFMNNNRSSKVVGMPGISNSSSEVSLMEPRSFDEMPQAIQALRERKTVILNLTMMDPDQAQRAVDFIAGGTYAIDGHQERVGESIFLFAPSCVNVTSSSPEEASPSSVSPKNTPQYSVENNTAPEPAWGNSKLSAFS.

Residues 150–191 are disordered; that stretch reads TSSSPEEASPSSVSPKNTPQYSVENNTAPEPAWGNSKLSAFS. Positions 151–164 are enriched in low complexity; that stretch reads SSSPEEASPSSVSP. A compositionally biased stretch (polar residues) spans 165–177; it reads KNTPQYSVENNTA.

Belongs to the SepF family. In terms of assembly, homodimer. Interacts with FtsZ.

It localises to the cytoplasm. Functionally, cell division protein that is part of the divisome complex and is recruited early to the Z-ring. Probably stimulates Z-ring formation, perhaps through the cross-linking of FtsZ protofilaments. Its function overlaps with FtsA. The polypeptide is Cell division protein SepF (Prochlorococcus marinus (strain MIT 9312)).